Consider the following 304-residue polypeptide: Proline dehydrogenase 2 (304 aa).

Position 97 (Lys-97) interacts with substrate. Residue Asp-131 is part of the active site. FAD-binding residues include Met-132 and Gln-160. Residue Arg-181 is part of the active site. FAD-binding positions include 184-186 (KGA) and 223-224 (TH). 285–286 (RR) contacts substrate.

The protein belongs to the proline dehydrogenase family. Requires FAD as cofactor.

It catalyses the reaction L-proline + a quinone = (S)-1-pyrroline-5-carboxylate + a quinol + H(+). The protein operates within amino-acid degradation; L-proline degradation into L-glutamate; L-glutamate from L-proline: step 1/2. Its function is as follows. Converts proline to delta-1-pyrroline-5-carboxylate. In Bacillus subtilis subsp. natto, this protein is Proline dehydrogenase 2.